The sequence spans 280 residues: Ribosomal RNA large subunit methyltransferase J (280 aa).

Residues histidine 19, histidine 42, serine 100, glutamate 118, 143–144 (DG), and aspartate 164 contribute to the S-adenosyl-L-methionine site. Aspartate 164 functions as the Proton acceptor in the catalytic mechanism.

Belongs to the RlmJ family. In terms of assembly, monomer.

The catalysed reaction is adenosine(2030) in 23S rRNA + S-adenosyl-L-methionine = N(6)-methyladenosine(2030) in 23S rRNA + S-adenosyl-L-homocysteine + H(+). Specifically methylates the adenine in position 2030 of 23S rRNA. Nascent 23S rRNA seems to be the natural substrate. Appears to be not necessary for ribosome assembly. Required for the utilization of extracellular DNA as the sole source of carbon and energy. The protein is Ribosomal RNA large subunit methyltransferase J of Escherichia coli (strain K12).